The sequence spans 498 residues: 3-octaprenyl-4-hydroxybenzoate carboxy-lyase (498 aa).

N175 contacts Mn(2+). Prenylated FMN-binding positions include 178 to 180, 192 to 194, and 197 to 198; these read IYR, RWL, and RG. Residue E241 coordinates Mn(2+). The active-site Proton donor is the D290.

It belongs to the UbiD family. As to quaternary structure, homohexamer. Prenylated FMN serves as cofactor. It depends on Mn(2+) as a cofactor.

Its subcellular location is the cell membrane. The enzyme catalyses a 4-hydroxy-3-(all-trans-polyprenyl)benzoate + H(+) = a 2-(all-trans-polyprenyl)phenol + CO2. It participates in cofactor biosynthesis; ubiquinone biosynthesis. In terms of biological role, catalyzes the decarboxylation of 3-octaprenyl-4-hydroxy benzoate to 2-octaprenylphenol, an intermediate step in ubiquinone biosynthesis. The chain is 3-octaprenyl-4-hydroxybenzoate carboxy-lyase from Yersinia pestis bv. Antiqua (strain Antiqua).